The sequence spans 993 residues: Signal peptide, CUB and EGF-like domain-containing protein 3 (993 aa).

The signal sequence occupies residues 1–20; that stretch reads MGSGRVPGLCLLLLLVHARA. The 41-residue stretch at 29–69 folds into the EGF-like 1; calcium-binding domain; the sequence is DVDECVEGTDNCHIDAICQNTPRSYKCICKSGYTGDGKHCK. 26 disulfides stabilise this stretch: cysteine 33-cysteine 46, cysteine 40-cysteine 55, cysteine 57-cysteine 68, cysteine 74-cysteine 86, cysteine 82-cysteine 95, cysteine 97-cysteine 110, cysteine 116-cysteine 127, cysteine 123-cysteine 136, cysteine 161-cysteine 172, cysteine 168-cysteine 182, cysteine 184-cysteine 197, cysteine 201-cysteine 212, cysteine 208-cysteine 221, cysteine 223-cysteine 236, cysteine 240-cysteine 251, cysteine 247-cysteine 260, cysteine 262-cysteine 275, cysteine 281-cysteine 292, cysteine 288-cysteine 301, cysteine 303-cysteine 316, cysteine 322-cysteine 332, cysteine 328-cysteine 341, cysteine 343-cysteine 355, cysteine 361-cysteine 372, cysteine 368-cysteine 381, and cysteine 383-cysteine 397. In terms of domain architecture, EGF-like 2; calcium-binding spans 70–111; sequence DVDECEREDNAGCVHDCVNIPGNYRCTCYDGFHLAHDGHNCL. The region spanning 112–148 is the EGF-like 3; calcium-binding domain; it reads DVDECAEGNGGCQQSCVNMMGSYECHCRDGFFLSDNQ. EGF-like domains follow at residues 157 to 198, 199 to 237, and 238 to 276; these read EGMN…RDCK, LTCN…KTCI, and ETCA…KTCK. The EGF-like 7; calcium-binding domain maps to 277–317; the sequence is DIDECRLNNGGCDHICRNTVGSFECSCKKGYKLLINERSCQ. The EGF-like 8; calcium-binding domain maps to 318-356; that stretch reads DIDECSFDRTCDHMCVNTPGSFQCLCHRGYLLYGVTHCG. Positions 357–398 constitute an EGF-like 9; calcium-binding domain; the sequence is DVDECSINKGGCRFGCINTPGSYQCTCPAGQGRLHWNGKDCT. Residues asparagine 417, asparagine 464, asparagine 685, asparagine 756, and asparagine 785 are each glycosylated (N-linked (GlcNAc...) asparagine). 2 disulfides stabilise this stretch: cysteine 804–cysteine 830 and cysteine 857–cysteine 878. The 113-residue stretch at 804 to 916 folds into the CUB domain; that stretch reads CGGELGEFTG…RGFQIPYVTY (113 aa).

In terms of assembly, forms homooligomers. Forms heterooligomers with SCUBE1 and SCUBE2. Interacts with TGFBR2 through the CUB domain; this interaction does not affect TGFB1-binding to TGFBR2. Interacts with BMP2, BMP4 and BMP7; the interaction is mediated by the CUB domain. Interacts with BMPR1A, BMPR1B and BMPR2; the interaction with BMPR1A and BMPR1B is BMP2- and BMP4-dependent. In terms of processing, N-glycosylated. Post-translationally, proteolytic cleavage produces a CUB-containing C-terminal fragment that retains the ability to bind to TGFBR2. This reaction is catalyzed in vitro by MMP2 and, to a lesser extent, by MMP9. Highly expressed in femur and humerus with little or no expression in non-bone tissues.

Its subcellular location is the secreted. The protein localises to the cell surface. Is a positive regulator of the BMP signaling pathway, required for proper chondrogenesis, osteogenesis and skeletal development. It acts as a coreceptor for BMP ligands, particularly BMP2 and BMP4, facilitating their interactions with BMP type I receptors. It is required for ligand-induced recruitment of BMP receptors to lipid rafts. Binds to TGFBR2 and activates TGFB signaling. This chain is Signal peptide, CUB and EGF-like domain-containing protein 3, found in Mus musculus (Mouse).